We begin with the raw amino-acid sequence, 147 residues long: MTIKLHHLRPAPGSKSNKIRVGRGEGGKRGKTAGRGTKGTKARNTVRVGFEGGQMPLHMRLPKLKGFTNPFRTEYQVVNVGDIARLFPEGGAITVEDLVAKGAVRKNQLVKVLGDGELTVAVQVTVDKFTGSAKEKIAAAGGSATEL.

A disordered region spans residues 1 to 42; sequence MTIKLHHLRPAPGSKSNKIRVGRGEGGKRGKTAGRGTKGTKA.

The protein belongs to the universal ribosomal protein uL15 family. As to quaternary structure, part of the 50S ribosomal subunit.

Binds to the 23S rRNA. This is Large ribosomal subunit protein uL15 from Rhodococcus erythropolis (strain PR4 / NBRC 100887).